Reading from the N-terminus, the 689-residue chain is Potassium-transporting ATPase ATP-binding subunit (689 aa).

A run of 4 helical transmembrane segments spans residues 35 to 55, 62 to 82, 220 to 240, and 260 to 280; these read VMFV…AILA, AAFT…ANFA, ALTI…ATLF, and VLVA…LSAI. The active-site 4-aspartylphosphate intermediate is the aspartate 313. ATP-binding positions include aspartate 350, glutamate 354, 383–390, and lysine 401; that span reads FSAQTRMS. Aspartate 524 and aspartate 528 together coordinate Mg(2+). Transmembrane regions (helical) follow at residues 594–614, 622–642, and 665–685; these read FAII…LNVM, AIMS…PLAL, and VGGL…LVAL.

It belongs to the cation transport ATPase (P-type) (TC 3.A.3) family. Type IA subfamily. The system is composed of three essential subunits: KdpA, KdpB and KdpC.

Its subcellular location is the cell inner membrane. The enzyme catalyses K(+)(out) + ATP + H2O = K(+)(in) + ADP + phosphate + H(+). Functionally, part of the high-affinity ATP-driven potassium transport (or Kdp) system, which catalyzes the hydrolysis of ATP coupled with the electrogenic transport of potassium into the cytoplasm. This subunit is responsible for energy coupling to the transport system and for the release of the potassium ions to the cytoplasm. This chain is Potassium-transporting ATPase ATP-binding subunit, found in Serratia proteamaculans (strain 568).